The chain runs to 176 residues: ATP synthase subunit b 2 (176 aa).

The chain crosses the membrane as a helical span at residues 29–49 (IFWLVITLVIIYMVLSKVALP).

It belongs to the ATPase B chain family. In terms of assembly, F-type ATPases have 2 components, F(1) - the catalytic core - and F(0) - the membrane proton channel. F(1) has five subunits: alpha(3), beta(3), gamma(1), delta(1), epsilon(1). F(0) has three main subunits: a(1), b(2) and c(10-14). The alpha and beta chains form an alternating ring which encloses part of the gamma chain. F(1) is attached to F(0) by a central stalk formed by the gamma and epsilon chains, while a peripheral stalk is formed by the delta and b chains.

It is found in the cell inner membrane. Its function is as follows. F(1)F(0) ATP synthase produces ATP from ADP in the presence of a proton or sodium gradient. F-type ATPases consist of two structural domains, F(1) containing the extramembraneous catalytic core and F(0) containing the membrane proton channel, linked together by a central stalk and a peripheral stalk. During catalysis, ATP synthesis in the catalytic domain of F(1) is coupled via a rotary mechanism of the central stalk subunits to proton translocation. Component of the F(0) channel, it forms part of the peripheral stalk, linking F(1) to F(0). The b'-subunit is a diverged and duplicated form of b found in plants and photosynthetic bacteria. The protein is ATP synthase subunit b 2 (atpF2) of Roseobacter denitrificans (strain ATCC 33942 / OCh 114) (Erythrobacter sp. (strain OCh 114)).